The following is a 601-amino-acid chain: Rhizobactin siderophore biosynthesis protein RhbF (601 aa).

It belongs to the IucA/IucC family.

Its pathway is siderophore biosynthesis; rhizobactin biosynthesis. The polypeptide is Rhizobactin siderophore biosynthesis protein RhbF (rhbF) (Rhizobium meliloti (strain 1021) (Ensifer meliloti)).